Consider the following 239-residue polypeptide: Serine protease SplC (239 aa).

A signal peptide spans 1-36; the sequence is MNKNIVIKSMAALAILTSATGINAAVVEETQQIANA. Catalysis depends on charge relay system residues His75, Asp113, and Ser193.

The protein belongs to the peptidase S1B family.

The protein localises to the secreted. This Staphylococcus aureus (strain MSSA476) protein is Serine protease SplC (splC).